Consider the following 595-residue polypeptide: Elongation factor 4 2 (595 aa).

Residues 4–187 enclose the tr-type G domain; it reads SHIRNFAIIA…AIKQRLPAPQ (184 aa). Residues 16-21 and 133-136 each bind GTP; these read DHGKST and NKVD.

This sequence belongs to the TRAFAC class translation factor GTPase superfamily. Classic translation factor GTPase family. LepA subfamily.

Its subcellular location is the cell membrane. It carries out the reaction GTP + H2O = GDP + phosphate + H(+). Required for accurate and efficient protein synthesis under certain stress conditions. May act as a fidelity factor of the translation reaction, by catalyzing a one-codon backward translocation of tRNAs on improperly translocated ribosomes. Back-translocation proceeds from a post-translocation (POST) complex to a pre-translocation (PRE) complex, thus giving elongation factor G a second chance to translocate the tRNAs correctly. Binds to ribosomes in a GTP-dependent manner. This chain is Elongation factor 4 2, found in Lactiplantibacillus plantarum (strain ATCC BAA-793 / NCIMB 8826 / WCFS1) (Lactobacillus plantarum).